The primary structure comprises 178 residues: Leukemia NUP98 fusion partner 1 (178 aa).

3 disordered regions span residues 28-55 (EDQR…PLPV), 89-108 (SEDG…HSKI), and 147-178 (IKSR…KGPE). Over residues 34–47 (RERHRLQATSHRKT) the composition is skewed to basic residues. The segment covering 147 to 167 (IKSRKKVEEERSSRKEEHGEA) has biased composition (basic and acidic residues).

The sequence is that of Leukemia NUP98 fusion partner 1 (LNP1) from Homo sapiens (Human).